We begin with the raw amino-acid sequence, 141 residues long: Transcription antitermination protein NusB (141 aa).

This sequence belongs to the NusB family.

In terms of biological role, involved in transcription antitermination. Required for transcription of ribosomal RNA (rRNA) genes. Binds specifically to the boxA antiterminator sequence of the ribosomal RNA (rrn) operons. The sequence is that of Transcription antitermination protein NusB from Neisseria meningitidis serogroup A / serotype 4A (strain DSM 15465 / Z2491).